Reading from the N-terminus, the 206-residue chain is Probable GTP-binding protein EngB (206 aa).

The 188-residue stretch at 8–195 (RDAEVVLVGR…EECLRTRFHE (188 aa)) folds into the EngB-type G domain. Residues 16–23 (GRSNVGKS), 41–45 (GVTRQ), 60–63 (DLPG), 140–143 (NKTD), and 175–177 (ICA) contribute to the GTP site. 2 residues coordinate Mg(2+): S23 and T43.

Belongs to the TRAFAC class TrmE-Era-EngA-EngB-Septin-like GTPase superfamily. EngB GTPase family. It depends on Mg(2+) as a cofactor.

Functionally, necessary for normal cell division and for the maintenance of normal septation. The sequence is that of Probable GTP-binding protein EngB from Halorubrum lacusprofundi (strain ATCC 49239 / DSM 5036 / JCM 8891 / ACAM 34).